Here is a 470-residue protein sequence, read N- to C-terminus: Sulfate adenylyltransferase subunit 1 (470 aa).

Positions 22 to 238 (KELLRFITCG…ETIKIDYAYT (217 aa)) constitute a tr-type G domain. Residues 31–38 (GSVDDGKS) form a G1 region. Residue 31–38 (GSVDDGKS) participates in GTP binding. The segment at 89 to 93 (GITID) is G2. The tract at residues 110–113 (DTPG) is G3. Residues 110-114 (DTPGH) and 165-168 (NKMD) contribute to the GTP site. Residues 165–168 (NKMD) are G4. Residues 202-204 (SAL) are G5.

It belongs to the TRAFAC class translation factor GTPase superfamily. Classic translation factor GTPase family. CysN/NodQ subfamily. As to quaternary structure, heterodimer composed of CysD, the smaller subunit, and CysN.

It catalyses the reaction sulfate + ATP + H(+) = adenosine 5'-phosphosulfate + diphosphate. Its pathway is sulfur metabolism; hydrogen sulfide biosynthesis; sulfite from sulfate: step 1/3. In terms of biological role, with CysD forms the ATP sulfurylase (ATPS) that catalyzes the adenylation of sulfate producing adenosine 5'-phosphosulfate (APS) and diphosphate, the first enzymatic step in sulfur assimilation pathway. APS synthesis involves the formation of a high-energy phosphoric-sulfuric acid anhydride bond driven by GTP hydrolysis by CysN coupled to ATP hydrolysis by CysD. This chain is Sulfate adenylyltransferase subunit 1, found in Francisella tularensis subsp. tularensis (strain SCHU S4 / Schu 4).